The following is a 541-amino-acid chain: MVNDTLTINTKHLLYALYASGVKHFVVSPGSRTTPIALMLAEYERQNSEIVVYIDVDERSAGFFALGIAKTRQEPVVVLGTSGTAITEYMPAVAEAKVSHIPLIVLSTDRPAELQNNGAPQTLPQHRLFGELTPYFVSFTLQDEHEDNTAYIDYMTQKLVHSAMDTGQPLQINLPLRKPLMPKLHDSHDVSITPLTFEKTHIHILPIVIKQTHVVILAGPNEAADYKDELLQFSRDHQVPVIADILSRARTTDTIFGVDSLIKAHYLTDEYRPDLVIRFGGTPVSARVLQWLQRENIPVWHVDGHAGNDHSRHVTRAFQMTPTAFLTQLALTNDMTFYQRWQQLNDIPRHAVGEASVSCMLNRILPENTAVFVANSMAIRDMDDVFSGRTTQKIYANRGVNGIDGVVSTALGMSTVSSQRSILLTGDLTLFHDMNGLMMAKKYQLNIDIIVINNNGGSIFSFLPQSQADEYFEDMFGTPLDLDMSKVAYLYDMPYIQLKGAAALGECLSHQVHGPRLIEINFDRQENVANHRELLELNQHE.

This sequence belongs to the TPP enzyme family. MenD subfamily. In terms of assembly, homodimer. The cofactor is Mg(2+). It depends on Mn(2+) as a cofactor. Thiamine diphosphate serves as cofactor.

The enzyme catalyses isochorismate + 2-oxoglutarate + H(+) = 5-enolpyruvoyl-6-hydroxy-2-succinyl-cyclohex-3-ene-1-carboxylate + CO2. The protein operates within quinol/quinone metabolism; 1,4-dihydroxy-2-naphthoate biosynthesis; 1,4-dihydroxy-2-naphthoate from chorismate: step 2/7. It functions in the pathway quinol/quinone metabolism; menaquinone biosynthesis. Catalyzes the thiamine diphosphate-dependent decarboxylation of 2-oxoglutarate and the subsequent addition of the resulting succinic semialdehyde-thiamine pyrophosphate anion to isochorismate to yield 2-succinyl-5-enolpyruvyl-6-hydroxy-3-cyclohexene-1-carboxylate (SEPHCHC). The polypeptide is 2-succinyl-5-enolpyruvyl-6-hydroxy-3-cyclohexene-1-carboxylate synthase (Leuconostoc citreum (strain KM20)).